The primary structure comprises 481 residues: Endoplasmic reticulum lectin 1 (481 aa).

A signal peptide spans 1–27; the sequence is MRRSDRLRCAGASLLVVLCGVFRSSFG. MRH domains follow at residues 108 to 245 and 340 to 467; these read SSCS…LCNH and SYCF…ICKI. 6 cysteine pairs are disulfide-bonded: C110–C123, C198–C231, C214–C243, C342–C355, C419–C453, and C434–C465.

The protein resides in the endoplasmic reticulum lumen. Functionally, probable lectin that binds selectively to improperly folded lumenal proteins. May function in endoplasmic reticulum quality control and endoplasmic reticulum-associated degradation (ERAD) of both non-glycosylated proteins and glycoproteins. The chain is Endoplasmic reticulum lectin 1 (erlec1) from Xenopus tropicalis (Western clawed frog).